Consider the following 249-residue polypeptide: Diaminopimelate epimerase (249 aa).

Asn-11 and Asn-60 together coordinate substrate. Residue Cys-69 is the Proton donor of the active site. Substrate is bound by residues 70 to 71 (GN), Asn-164, and 182 to 183 (ER). Catalysis depends on Cys-192, which acts as the Proton acceptor. 193-194 (GT) is a substrate binding site.

The protein belongs to the diaminopimelate epimerase family. In terms of assembly, homodimer.

It localises to the cytoplasm. It catalyses the reaction (2S,6S)-2,6-diaminopimelate = meso-2,6-diaminopimelate. Its pathway is amino-acid biosynthesis; L-lysine biosynthesis via DAP pathway; DL-2,6-diaminopimelate from LL-2,6-diaminopimelate: step 1/1. Catalyzes the stereoinversion of LL-2,6-diaminopimelate (L,L-DAP) to meso-diaminopimelate (meso-DAP), a precursor of L-lysine and an essential component of the bacterial peptidoglycan. This is Diaminopimelate epimerase from Campylobacter jejuni subsp. jejuni serotype O:6 (strain 81116 / NCTC 11828).